The following is a 406-amino-acid chain: Cysteine desulfurase (406 aa).

N6-(pyridoxal phosphate)lysine is present on Lys-226. The Cysteine persulfide intermediate role is filled by Cys-364.

Belongs to the class-V pyridoxal-phosphate-dependent aminotransferase family. Csd subfamily. In terms of assembly, homodimer. Interacts with SufE and the SufBCD complex composed of SufB, SufC and SufD. The interaction with SufE is required to mediate the direct transfer of the sulfur atom from the S-sulfanylcysteine. Requires pyridoxal 5'-phosphate as cofactor.

It is found in the cytoplasm. It carries out the reaction (sulfur carrier)-H + L-cysteine = (sulfur carrier)-SH + L-alanine. The catalysed reaction is L-selenocysteine + AH2 = hydrogenselenide + L-alanine + A + H(+). The protein operates within cofactor biosynthesis; iron-sulfur cluster biosynthesis. Cysteine desulfurases mobilize the sulfur from L-cysteine to yield L-alanine, an essential step in sulfur metabolism for biosynthesis of a variety of sulfur-containing biomolecules. Component of the suf operon, which is activated and required under specific conditions such as oxidative stress and iron limitation. Acts as a potent selenocysteine lyase in vitro, that mobilizes selenium from L-selenocysteine. Selenocysteine lyase activity is however unsure in vivo. The sequence is that of Cysteine desulfurase from Escherichia coli O9:H4 (strain HS).